The primary structure comprises 314 residues: Putative S-adenosyl-L-methionine-dependent methyltransferase MMAR_5323 (314 aa).

S-adenosyl-L-methionine is bound by residues Asp-132 and 161-162 (DL).

It belongs to the UPF0677 family.

In terms of biological role, exhibits S-adenosyl-L-methionine-dependent methyltransferase activity. The protein is Putative S-adenosyl-L-methionine-dependent methyltransferase MMAR_5323 of Mycobacterium marinum (strain ATCC BAA-535 / M).